An 80-amino-acid polypeptide reads, in one-letter code: MTNTKTLEENISFEEALKELEEIVKKIDNGQESLETAVNSFERGILLKNHCEKKLKEARLKIEKITKLADSTGVLEETEV.

This sequence belongs to the XseB family. In terms of assembly, heterooligomer composed of large and small subunits.

Its subcellular location is the cytoplasm. The enzyme catalyses Exonucleolytic cleavage in either 5'- to 3'- or 3'- to 5'-direction to yield nucleoside 5'-phosphates.. Its function is as follows. Bidirectionally degrades single-stranded DNA into large acid-insoluble oligonucleotides, which are then degraded further into small acid-soluble oligonucleotides. The polypeptide is Exodeoxyribonuclease 7 small subunit (Rickettsia felis (strain ATCC VR-1525 / URRWXCal2) (Rickettsia azadi)).